We begin with the raw amino-acid sequence, 207 residues long: Alpha-1-acid glycoprotein 1 (207 aa).

A signal peptide spans 1–18 (MALHTVLIILSLLPMLEA). At Gln-19 the chain carries Pyrrolidone carboxylic acid. Asn-25, Asn-34, Asn-76, Asn-94, and Asn-104 each carry an N-linked (GlcNAc...) asparagine glycan. A disulfide bridge links Cys-91 with Cys-184.

Belongs to the calycin superfamily. Lipocalin family.

The protein resides in the secreted. Its function is as follows. Functions as a transport protein in the blood stream. Binds various ligands in the interior of its beta-barrel domain. Appears to function in modulating the activity of the immune system during the acute-phase reaction. The polypeptide is Alpha-1-acid glycoprotein 1 (Orm1) (Mus musculus (Mouse)).